The sequence spans 633 residues: GTPase-activating protein GYP3 (633 aa).

Positions 26–127 (AFTVKSPSVP…HSDDLDLVPD (102 aa)) are disordered. Residues 37–47 (FHDKMHSDHSS) show a composition bias toward basic and acidic residues. Acidic residues predominate over residues 99–115 (GEDDDDNNGDNGNEDLE). Serine 147 carries the phosphoserine modification. Residues 223–456 (GIPAEWRGNA…RIWDCLFYEE (234 aa)) form the Rab-GAP TBC domain. Residue serine 484 is modified to Phosphoserine.

It is found in the cytoplasm. It localises to the bud. The protein localises to the bud neck. Functionally, regulates exocytosis by functioning as a GAP for SEC4. Stimulates specifically the GTPase activity of YPT6. Also required for efficient polarization of the actin patches. This Saccharomyces cerevisiae (strain ATCC 204508 / S288c) (Baker's yeast) protein is GTPase-activating protein GYP3 (MSB3).